Reading from the N-terminus, the 98-residue chain is Protein S100-A13 (98 aa).

In terms of domain architecture, EF-hand spans Ser18–Val53. 7 residues coordinate Ca(2+): Ser32, Glu37, Asp64, Asn66, Asp68, Glu70, and Glu75. Ser32 bears the Phosphoserine mark.

It belongs to the S-100 family. Homodimer. Part of a copper-dependent multiprotein complex containing S100A13, FGF1 and SYT1. Interacts with FGF1 and SYT1. Interacts with IL1A.

The protein resides in the cytoplasm. It localises to the secreted. Plays a role in the export of proteins that lack a signal peptide and are secreted by an alternative pathway. Binds two calcium ions per subunit. Binds one copper ion. Binding of one copper ion does not interfere with calcium binding. Required for the copper-dependent stress-induced export of IL1A and FGF1. The calcium-free protein binds to lipid vesicles containing phosphatidylserine, but not to vesicles containing phosphatidylcholine. The chain is Protein S100-A13 (S100a13) from Mus musculus (Mouse).